We begin with the raw amino-acid sequence, 86 residues long: Acyl carrier protein (86 aa).

Residues aspartate 10 to glutamine 85 enclose the Carrier domain. Serine 45 is subject to O-(pantetheine 4'-phosphoryl)serine.

The protein belongs to the acyl carrier protein (ACP) family. In terms of processing, 4'-phosphopantetheine is transferred from CoA to a specific serine of apo-ACP by AcpS. This modification is essential for activity because fatty acids are bound in thioester linkage to the sulfhydryl of the prosthetic group.

The protein localises to the cytoplasm. The protein operates within lipid metabolism; fatty acid biosynthesis. Carrier of the growing fatty acid chain in fatty acid biosynthesis. The chain is Acyl carrier protein from Rickettsia prowazekii (strain Madrid E).